Consider the following 1529-residue polypeptide: Mediator of RNA polymerase II transcription subunit 1.1 (1529 aa).

3 disordered regions span residues 685–740, 807–919, and 933–1529; these read PDAA…VVGE, QYRM…MRDN, and PDIE…IDDE. Positions 693-702 are enriched in basic residues; that stretch reads GKQRKPRAKK. Low complexity-rich tracts occupy residues 722 to 739 and 807 to 828; these read GAAA…GVVG and QYRM…PQQQ. Positions 894–905 are enriched in pro residues; that stretch reads TPSPLSAPPKPF. Over residues 908–919 the composition is skewed to basic and acidic residues; that stretch reads EQHHFGTKMRDN. 2 stretches are compositionally biased toward low complexity: residues 958–990 and 1008–1023; these read SSSS…TAQT and QEQA…IQQQ. A coiled-coil region spans residues 1008–1032; sequence QEQALQKQEQQRIQQQDSVDSTNSE. Polar residues-rich tracts occupy residues 1051–1061, 1068–1089, and 1096–1105; these read NQVNRVMNMSN, GSST…STGS, and TPGTSSNIAQ. Composition is skewed to basic and acidic residues over residues 1113 to 1130, 1137 to 1185, 1192 to 1240, and 1262 to 1278; these read LKKE…EKLI, LKVD…ERDK, RDRT…KELS, and PKKD…KDES. Residues 1169 to 1202 are a coiled coil; sequence EKEDKSQREKDKKERDKERKRRDRDRTEAKKEKD. The span at 1279 to 1288 shows a compositional bias: low complexity; sequence IPGPSTSSES. Residues 1289–1304 are compositionally biased toward basic and acidic residues; it reads STRKEVAPAPISRKES. Positions 1349-1365 are enriched in low complexity; that stretch reads SYSGSSNAGPISSSSRG. Composition is skewed to pro residues over residues 1375–1386 and 1477–1500; these read PVLPPPALPMRG and QPPP…APPS.

The protein belongs to the Mediator complex subunit 1 family. As to quaternary structure, component of the Mediator complex.

The protein resides in the nucleus. Functionally, component of the Mediator complex, a coactivator involved in the regulated transcription of nearly all RNA polymerase II-dependent genes. Mediator functions as a bridge to convey information from gene-specific regulatory proteins to the basal RNA polymerase II transcription machinery. Mediator is recruited to promoters by direct interactions with regulatory proteins and serves as a scaffold for the assembly of a functional preinitiation complex with RNA polymerase II and the general transcription factors. This Caenorhabditis briggsae protein is Mediator of RNA polymerase II transcription subunit 1.1 (sop-3).